We begin with the raw amino-acid sequence, 406 residues long: Indole-3-pyruvate monooxygenase YUCCA1 (406 aa).

FAD is bound at residue 21 to 26 (GAGPSG). 184 to 189 (GCGNSG) contacts NADP(+).

Belongs to the FMO family. FAD serves as cofactor. As to expression, expressed in coleoptile tips, root tips, leaf blade tips, shoot apical meristem, vasculature of stems and flowers.

It carries out the reaction indole-3-pyruvate + NADPH + O2 + H(+) = (indol-3-yl)acetate + CO2 + NADP(+) + H2O. Functionally, involved in auxin biosynthesis. Converts the indole-3-pyruvic acid (IPA) produced by the TAA family to indole-3-acetic acid (IAA). Functions downstream of TAR2 in auxin biosynthesis. Functions upstream of WOX11, a transcription factor that promotes the development of crown roots. This is Indole-3-pyruvate monooxygenase YUCCA1 from Oryza sativa subsp. japonica (Rice).